Reading from the N-terminus, the 1231-residue chain is MNKTLGLILTSVFLLSTLGIITGFVIPTQAANSNDAAIYTIPSVTSVSNTSNIVINLFFNATSNSTVGAQASAFNYGLAINYTLDAITFTVVLPSGTSYPLIKLNAKNFANYGYYDLAHNSIVLLLNTTASSTAKELAYSYEQSIGVTPSASYKIYNYTNKTVNVNQYMNELPLSMLIYMATNGKYNNLASLPVGTKLEFTYAGVTYIIAVSPTVKLVGELLNPLYTANSKMLPGTNYAVGRSNITVAVYDNLITTTTSPFNFTLTYSSLAPALIYWFVIANTTYTNNGASTPTASFQAPPFKQYFPSNSTILYSAAPTKSSILMFNGQMNVTAHENVTLTLQTGTNIYTSPNFNVTPPGNYTFSGKLGVGFNGFIYQNGSATLTATIFNGTINFFFSSTGQKAAFTFFLVPIVPINLGDNNGATVIYNGVSLNTGFPQVVVMFNITGNFTKSGSNYLLYGSVYEAELKPLGSTQLQKLAGATDSTQFVGNLISSASSPLVSYFNYGESTTTITGTSLSFTVLMPLKFIVERLGYIYLVTFHIWGPSATVTVTGVDYHGTQIALGSFRAYVALPSFYTLPKTPLVGLTCDNMYTLAQVSDAGSVLETSTANSNANNATVIGPYDLMSNAGLHVAIYNGSKLVKSGNLGLLPNATTAPITTTITLNGQTVALTYSSAPTAIYPVDFKFEPGFSYSVTTNVIYNTSIPTYVVTVYMPLKYILQTKIVMWYVSPDYAAYFYYSSTGQYQTSNVTLTFANVTPELVMPQVFPVGKLYMPFGINDPYYVFYSSISIGPQSGVIEAVENGFNVGNITSITVELNGMNESIVLSPLNVSKLLISSNLGEVSQCSPLFTTTLFNISALASLLGLPNAAALNGSYLYVTYHDIISGAYVTNRTLLVVGQFYVMPPTTPGSVEWILTAKYINATTGIPVEISYAVVQQPSAKVVDINAANASITQIQVTGVKIVSKYATVTVMYNPSNASTIVYMNGMFVASYGGNLISSLSETSTFGVYYGAVVNLYVATGTLSSPNGTMYVVLGSHKVAVGTANLYTYAGYHFGPYTALPLVSNVTFTVQDPVTHATLTGQTTLGAFNNTPIRLAPLGVSIPQTAQYKVFYYYSTPLVLSPTSQYIVLSVTSVISYPYPFYIETVSFLGYNVTTGTPVPGTPAFQTVYSPSLGPGVVLQVPVQSYQFISLSTPSEPHTVVMFAVPFAGGPAISLYPTFLVYANVTAISS.

The N-terminal stretch at Met-1–Asp-35 is a signal peptide.

It belongs to the Sulfolobales SlaA family. The mushroom-shaped unit cells of the Sulfolobales' S-layers may consist of three SlaB subunits and six SlaA subunits.

It is found in the secreted. The protein localises to the cell wall. It localises to the S-layer. Its function is as follows. S-layer large protein. May form the highly ordered outer sheath. In Saccharolobus solfataricus (strain ATCC 35092 / DSM 1617 / JCM 11322 / P2) (Sulfolobus solfataricus), this protein is S-layer protein A.